The following is an 84-amino-acid chain: LYR motif-containing protein 5B (84 aa).

This sequence belongs to the complex I LYR family.

The sequence is that of LYR motif-containing protein 5B (lyrm5b) from Danio rerio (Zebrafish).